The sequence spans 230 residues: 3-dehydroquinate dehydratase (230 aa).

Residues serine 26, 51 to 53 (EIR), and arginine 84 each bind 3-dehydroquinate. Histidine 127 serves as the catalytic Proton donor/acceptor. Lysine 150 (schiff-base intermediate with substrate) is an active-site residue. Residues arginine 190, threonine 209, and glutamine 213 each contribute to the 3-dehydroquinate site.

Belongs to the type-I 3-dehydroquinase family. Homodimer.

The catalysed reaction is 3-dehydroquinate = 3-dehydroshikimate + H2O. The protein operates within metabolic intermediate biosynthesis; chorismate biosynthesis; chorismate from D-erythrose 4-phosphate and phosphoenolpyruvate: step 3/7. Its function is as follows. Involved in the third step of the chorismate pathway, which leads to the biosynthesis of aromatic amino acids. Catalyzes the cis-dehydration of 3-dehydroquinate (DHQ) and introduces the first double bond of the aromatic ring to yield 3-dehydroshikimate. This is 3-dehydroquinate dehydratase from Thermoplasma volcanium (strain ATCC 51530 / DSM 4299 / JCM 9571 / NBRC 15438 / GSS1).